The primary structure comprises 250 residues: tRNA (guanine-N(1)-)-methyltransferase (250 aa).

Residues glycine 115 and 135–140 (LGDFVL) each bind S-adenosyl-L-methionine.

Belongs to the RNA methyltransferase TrmD family. In terms of assembly, homodimer.

It is found in the cytoplasm. The enzyme catalyses guanosine(37) in tRNA + S-adenosyl-L-methionine = N(1)-methylguanosine(37) in tRNA + S-adenosyl-L-homocysteine + H(+). Functionally, specifically methylates guanosine-37 in various tRNAs. The sequence is that of tRNA (guanine-N(1)-)-methyltransferase from Legionella pneumophila (strain Paris).